Consider the following 317-residue polypeptide: Type II restriction enzyme NaeI (317 aa).

As to quaternary structure, homodimer.

The catalysed reaction is Endonucleolytic cleavage of DNA to give specific double-stranded fragments with terminal 5'-phosphates.. Its function is as follows. An E and P subtype restriction enzyme that recognizes the double-stranded unmethylated sequence 5'-GCCGGC-3' and cleaves after C-3. This Lentzea aerocolonigenes (Lechevalieria aerocolonigenes) protein is Type II restriction enzyme NaeI.